Consider the following 284-residue polypeptide: Tropomyosin-1 (284 aa).

The stretch at 1–284 (MDAIKKKMLA…DSTFAELAGY (284 aa)) forms a coiled coil. Residues 103–131 (EERLQSATEKLEEASKAADESERGRKVLE) are disordered.

This sequence belongs to the tropomyosin family. In terms of assembly, homodimer.

In terms of biological role, tropomyosin, in association with the troponin complex, plays a central role in the calcium dependent regulation of muscle contraction. The chain is Tropomyosin-1 from Biomphalaria glabrata (Bloodfluke planorb).